The primary structure comprises 175 residues: uncharacterized protein (175 aa).

2 consecutive transmembrane segments (helical) span residues 21-41 and 50-70; these read IVLD…MGPI and LVGL…VFVI.

Its subcellular location is the membrane. This is an uncharacterized protein from Saccharomyces cerevisiae (strain ATCC 204508 / S288c) (Baker's yeast).